We begin with the raw amino-acid sequence, 101 residues long: MMLEHVLVLSAYLFSVGLYGLITSRNMVRALMCLELILNAVNINFVTFSDFFDSRQLKGAIFSIFVIAIAAAEAAIGLAIVSSIYRNRKSIRINQSNLLNK.

The next 3 helical transmembrane spans lie at 2-22 (MLEH…YGLI), 32-52 (MCLE…SDFF), and 61-81 (IFSI…LAIV).

Belongs to the complex I subunit 4L family. In terms of assembly, NDH is composed of at least 16 different subunits, 5 of which are encoded in the nucleus.

The protein localises to the plastid. It is found in the chloroplast thylakoid membrane. The catalysed reaction is a plastoquinone + NADH + (n+1) H(+)(in) = a plastoquinol + NAD(+) + n H(+)(out). It carries out the reaction a plastoquinone + NADPH + (n+1) H(+)(in) = a plastoquinol + NADP(+) + n H(+)(out). Its function is as follows. NDH shuttles electrons from NAD(P)H:plastoquinone, via FMN and iron-sulfur (Fe-S) centers, to quinones in the photosynthetic chain and possibly in a chloroplast respiratory chain. The immediate electron acceptor for the enzyme in this species is believed to be plastoquinone. Couples the redox reaction to proton translocation, and thus conserves the redox energy in a proton gradient. The protein is NAD(P)H-quinone oxidoreductase subunit 4L, chloroplastic of Panax ginseng (Korean ginseng).